Here is a 262-residue protein sequence, read N- to C-terminus: Succinate dehydrogenase [ubiquinone] iron-sulfur subunit (262 aa).

One can recognise a 2Fe-2S ferredoxin-type domain in the interval 21-110 (KLIKIFRWDS…NNIIYVYPLP (90 aa)). [2Fe-2S] cluster contacts are provided by C73, C78, C81, and C93. The 4Fe-4S ferredoxin-type domain maps to 154–184 (DRLYLDGLYECILCACCSASCPSYWWNHDKY). 3 residues coordinate [4Fe-4S] cluster: C164, C167, and C170. Residue C174 participates in [3Fe-4S] cluster binding. W179 is a binding site for a ubiquinone. Residues C221 and C227 each contribute to the [3Fe-4S] cluster site. C231 provides a ligand contact to [4Fe-4S] cluster.

Belongs to the succinate dehydrogenase/fumarate reductase iron-sulfur protein family. Component of complex II composed of four subunits: a flavoprotein (FP), an iron-sulfur protein (IP), and a cytochrome b composed of a large and a small subunit. It depends on [2Fe-2S] cluster as a cofactor. The cofactor is [3Fe-4S] cluster. Requires [4Fe-4S] cluster as cofactor.

It localises to the mitochondrion inner membrane. It catalyses the reaction a quinone + succinate = fumarate + a quinol. It participates in carbohydrate metabolism; tricarboxylic acid cycle; fumarate from succinate (eukaryal route): step 1/1. In terms of biological role, iron-sulfur protein (IP) subunit of succinate dehydrogenase (SDH) that is involved in complex II of the mitochondrial electron transport chain and is responsible for transferring electrons from succinate to ubiquinone (coenzyme Q). The chain is Succinate dehydrogenase [ubiquinone] iron-sulfur subunit (SDH2) from Cyanidium caldarium (Red alga).